We begin with the raw amino-acid sequence, 183 residues long: BLOC-1-related complex subunit 8 homolog (183 aa).

The disordered stretch occupies residues 152–183; it reads MIGPGTATGRTEAQAATSSNPGELQRSYTTLH. Residues 159-183 show a composition bias toward polar residues; that stretch reads TGRTEAQAATSSNPGELQRSYTTLH.

Belongs to the BORCS8 family.

Its subcellular location is the lysosome membrane. In terms of biological role, may participate in the coupling of lysosomes to microtubule plus-end-directed kinesin motor. This chain is BLOC-1-related complex subunit 8 homolog, found in Drosophila melanogaster (Fruit fly).